The primary structure comprises 205 residues: Probable GTP-binding protein EngB (205 aa).

Positions 8 to 195 constitute an EngB-type G domain; it reads RDAEVVLIGR…NEAVRHHLHE (188 aa). Residues 16 to 23, 41 to 45, 60 to 63, 140 to 143, and 175 to 177 each bind GTP; these read GRSNVGKS, GVTRS, DLPG, NKMD, and ISA. Residues Ser-23 and Thr-43 each contribute to the Mg(2+) site.

The protein belongs to the TRAFAC class TrmE-Era-EngA-EngB-Septin-like GTPase superfamily. EngB GTPase family. The cofactor is Mg(2+).

Functionally, necessary for normal cell division and for the maintenance of normal septation. This is Probable GTP-binding protein EngB from Haloarcula marismortui (strain ATCC 43049 / DSM 3752 / JCM 8966 / VKM B-1809) (Halobacterium marismortui).